The sequence spans 1323 residues: MASDSPARSLDEIDLSALRDPAGIFELVELVGNGTYGQVYKGRHVKTGQLAAIKVMDVTGDEEEEIKQEINMLKKYSHHRNIATYYGAFIKKNPPGMDDQLWLVMEFCGAGSVTDLIKNTKGNTLKEEWIAYICREILRGLSHLHQHKVIHRDIKGQNVLLTENAEVKLVDFGVSAQLDRTVGRRNTFIGTPYWMAPEVIACDENPDATYDFKSDLWSLGITAIEMAEGAPPLCDMHPMRALFLIPRNPAPRLKSKKWSKKFQSFIESCLVKNHSQRPATEQLMKHPFIRDQPNERQVRIQLKDHIDRTKKKRGEKDETEYEYSGSEEEEEENDSGEPSSILNLPGESTLRRDFLRLQLANKERSEALRRQQLEQQQRENEEHKRQLLAERQKRIEEQKEQRRRLEEQQRREKELRKQQEREQRRHYEEQMRREEERRRAEHEQEYKRKQLEEQRQAERLQRQLKQERDYLVSLQHQRQEQRPLEKKPLYHYKEGMSPSEKPAWAKEVEERSRLNRQSSPAMPHKVANRISDPNLPPRSESFSISGVQPARTPPMLRPVDPQIPQLVAVKSQGPALTASQSVHEQPTKGLSGFQEALNVTSHRVEMPRQNSDPTSENPPLPTRIEKFDRSSWLRQEEDIPPKVPQRTTSISPALARKNSPGNGSALGPRLGSQPIRASNPDLRRTEPVLESSLQRTSSGSSSSSSTPSSQPSSQGGSQPGSQAGSSERSRVRANSKSEGSPVLPHEPSKVKPEESRDITRPSRPADLTALAKELRELRIEETNRPLKKVTDYSSSSEESESSEEEEEDGESETHDGTVAVSDIPRLIPTGAPGNNEQYNMGMVGTHGLETSHADTFGGSISREGTLMIRETAEEKKRSGHSDSNGFAGHINLPDLVQQSHSPAGTPTEGLGRVSTHSQEMDSGAEYGIGSSTKASFTPFVDPRVYQTSPTDEDEEDDESSAAALFTSELLRQEQAKLNEARKISVVNVNPTNIRPHSDTPEIRKYKKRFNSEILCAALWGVNLLVGTENGLMLLDRSGQGKVYNLINRRRFQQMDVLEGLNVLVTISGKKNKLRVYYLSWLRNRILHNDPEVEKKQGWITVGDLEGCIHYKVVKYERIKFLVIALKNAVEIYAWAPKPYHKFMAFKSFADLQHKPLLVDLTVEEGQRLKVIFGSHTGFHVIDVDSGNSYDIYIPSHIQGNITPHAIVILPKTDGMEMLVCYEDEGVYVNTYGRITKDVVLQWGEMPTSVAYIHSNQIMGWGEKAIEIRSVETGHLDGVFMHKRAQRLKFLCERNDKVFFASVRSGGSSQVFFMTLNRNSMMNW.

In terms of domain architecture, Protein kinase spans 25 to 289 (FELVELVGNG…TEQLMKHPFI (265 aa)). ATP is bound by residues 31–39 (VGNGTYGQV) and K54. D153 acts as the Proton acceptor in catalysis. T187 bears the Phosphothreonine mark. 3 disordered regions span residues 284 to 347 (MKHP…LPGE), 397 to 559 (EQKE…LRPV), and 571 to 838 (SQGP…NEQY). The segment covering 288-307 (FIRDQPNERQVRIQLKDHID) has biased composition (basic and acidic residues). The segment at 290 to 1010 (RDQPNERQVR…EIRKYKKRFN (721 aa)) is mediates interaction with NEDD4. The span at 317-335 (DETEYEYSGSEEEEEENDS) shows a compositional bias: acidic residues. A phosphoserine mark is found at S324 and S326. Basic and acidic residues-rich tracts occupy residues 397–470 (EQKE…ERDY), 477–494 (QRQEQRPLEKKPLYHYKE), and 503–513 (AWAKEVEERSR). S531 and S541 each carry phosphoserine. Position 552 is a phosphothreonine (T552). S571, S579, S581, and S611 each carry phosphoserine. The span at 623-640 (RIEKFDRSSWLRQEEDIP) shows a compositional bias: basic and acidic residues. Phosphoserine is present on residues S649, S651, S659, S672, S678, S691, S735, S737, and S740. A compositionally biased stretch (low complexity) spans 691-726 (SSLQRTSSGSSSSSSTPSSQPSSQGGSQPGSQAGSS). Basic and acidic residues-rich tracts occupy residues 746-760 (EPSKVKPEESRDITR) and 772-790 (KELRELRIEETNRPLKKVT). Positions 797 to 810 (EESESSEEEEEDGE) are enriched in acidic residues. The residue at position 922 (S922) is a Phosphoserine. The segment at 939-960 (FVDPRVYQTSPTDEDEEDDESS) is disordered. Positions 950-959 (TDEDEEDDES) are enriched in acidic residues. Residues 1010-1297 (NSEILCAALW…KFLCERNDKV (288 aa)) form the CNH domain.

The protein belongs to the protein kinase superfamily. STE Ser/Thr protein kinase family. STE20 subfamily. As to quaternary structure, interacts (via the CNH domain) with RAP2A (GTP-bound form preferentially); the interaction is direct and required for the activation of TNIK by RAP2A. Interacts with NEDD4; recruits RAP2A to NEDD4. Interacts with TRAF2 and NCK. Interacts with TCF7L2/TCF4 and CTNNB1; the interaction is direct. Interacts with TANC1. In terms of processing, autophosphorylated. Autophosphorylation is activated by RAP2A and induces association to the cytoskeletal fraction.

It is found in the nucleus. It localises to the cytoplasm. Its subcellular location is the recycling endosome. The protein resides in the cytoskeleton. It catalyses the reaction L-seryl-[protein] + ATP = O-phospho-L-seryl-[protein] + ADP + H(+). The enzyme catalyses L-threonyl-[protein] + ATP = O-phospho-L-threonyl-[protein] + ADP + H(+). In terms of biological role, serine/threonine kinase that acts as an essential activator of the Wnt signaling pathway. Recruited to promoters of Wnt target genes and required to activate their expression. May act by phosphorylating TCF4/TCF7L2. Appears to act upstream of the JUN N-terminal pathway. May play a role in the response to environmental stress. Part of a signaling complex composed of NEDD4, RAP2A and TNIK which regulates neuronal dendrite extension and arborization during development. More generally, it may play a role in cytoskeletal rearrangements and regulate cell spreading. Phosphorylates SMAD1 on Thr-322. Activator of the Hippo signaling pathway which plays a pivotal role in organ size control and tumor suppression by restricting proliferation and promoting apoptosis. MAP4Ks act in parallel to and are partially redundant with STK3/MST2 and STK4/MST2 in the phosphorylation and activation of LATS1/2, and establish MAP4Ks as components of the expanded Hippo pathway. The protein is Traf2 and NCK-interacting protein kinase (Tnik) of Mus musculus (Mouse).